Reading from the N-terminus, the 598-residue chain is Probable pectinesterase/pectinesterase inhibitor 34 (598 aa).

Residues 1-40 are disordered; that stretch reads MGYERLGPSGATGSVTTSTTTAPILNQVSTSEQPENNNRR. Residues 7 to 23 show a composition bias toward low complexity; the sequence is GPSGATGSVTTSTTTAP. The segment covering 24–36 has biased composition (polar residues); it reads ILNQVSTSEQPEN. Residues 46–66 form a helical membrane-spanning segment; that stretch reads VVSSIVLAISLILAAAIFAGV. Positions 81-232 are pectinesterase inhibitor 34; the sequence is RKPSQAISKA…SELVSNCLAI (152 aa). The tract at residues 284–582 is pectinesterase 34; sequence DIIVSKDGNG…FTVAEFIYGS (299 aa). The substrate site is built by T360 and Q390. Residue D413 is the Proton donor; for pectinesterase activity of the active site. C427 and C447 are oxidised to a cystine. D434 acts as the Nucleophile; for pectinesterase activity in catalysis. Residues R502 and W504 each contribute to the substrate site.

This sequence in the N-terminal section; belongs to the PMEI family. It in the C-terminal section; belongs to the pectinesterase family. As to expression, expressed in siliques.

Its subcellular location is the membrane. It carries out the reaction [(1-&gt;4)-alpha-D-galacturonosyl methyl ester](n) + n H2O = [(1-&gt;4)-alpha-D-galacturonosyl](n) + n methanol + n H(+). Its pathway is glycan metabolism; pectin degradation; 2-dehydro-3-deoxy-D-gluconate from pectin: step 1/5. Its function is as follows. Acts in the modification of cell walls via demethylesterification of cell wall pectin. This is Probable pectinesterase/pectinesterase inhibitor 34 (PME34) from Arabidopsis thaliana (Mouse-ear cress).